A 711-amino-acid polypeptide reads, in one-letter code: Amyloid beta precursor protein binding family B member 1 (711 aa).

Position 135 is a phosphoserine (Ser135). Disordered regions lie at residues 140–257 (NTQG…SDLP), 277–300 (GTTQ…EESQ), and 321–364 (EPSE…QRNA). Positions 156–174 (EVEEEDEDEEEEDEEEEDL) are enriched in acidic residues. Position 205 is an N6-acetyllysine (Lys205). The span at 224–235 (SWATLSQGSPSY) shows a compositional bias: polar residues. One can recognise a WW domain in the interval 254–286 (SDLPAGWMRVQDTSGTYYWHIPTGTTQWEPPGR). Residues 288-300 (SPSQGNSPQEESQ) are compositionally biased toward polar residues. PID domains lie at 365-533 (NPGI…QVEF) and 538-700 (NELV…LWGS). Phosphoserine; by PKC is present on Ser460. Ser518 is subject to Phosphoserine. Phosphotyrosine; by ABL1 is present on Tyr548. Ser611 is subject to Phosphoserine; by SGK1. Residue Lys702 is modified to N6-acetyllysine.

Component of a complex, at least composed of APBB1, RASD1/DEXRAS1 and APP. Interacts (via PID domain 2) with APP (with the intracellular domain of the amyloid-beta precursor protein). Interacts (via PID domain 2) with RASD1/DEXRAS1; impairs the transcription activation activity. Interacts (via PID domain 1) with KAT5/TIP60. Interacts (via the WW domain) with the proline-rich region of APBB1IP. Interacts with TSHZ1 and TSHZ2. Interacts (via the WW domain) with histone H2AX (when phosphorylated on 'Tyr-142') and the proline-rich region of ENAH. Interacts with MAPK8. Interacts (via PID domain 1) with TSHZ3 (via homeobox domain). Interacts with SET. Found in a trimeric complex with HDAC1 and TSHZ3; the interaction between HDAC1 and APBB1 is mediated by TSHZ3. Interacts (via WWW domain) with NEK6. Interacts (via WWW domain) with ABL1. Interacts with RNF157. Interacts with ARF6. Post-translationally, polyubiquitination by RNF157 leads to degradation by the proteasome. In terms of processing, phosphorylation at Ser-611 by SGK1 promotes its localization to the nucleus. Phosphorylated following nuclear translocation. Phosphorylation at Tyr-547 by ABL1 enhances transcriptional activation activity and reduces the affinity for RASD1/DEXRAS1. Phosphorylated at Ser-460 by PKC upon insulin activation. Acetylation at Lys-205 and Lys-702 by KAT5 promotes its transcription activator activity. As to expression, brain, not in liver, very low in other tissues. The long (neuron-specific) form is expressed only in brain.

Its subcellular location is the cell membrane. It localises to the cytoplasm. The protein resides in the nucleus. The protein localises to the cell projection. It is found in the growth cone. Its subcellular location is the nucleus speckle. In terms of biological role, transcription coregulator that can have both coactivator and corepressor functions. Adapter protein that forms a transcriptionally active complex with the gamma-secretase-derived amyloid precursor protein (APP) intracellular domain. Plays a central role in the response to DNA damage by translocating to the nucleus and inducing apoptosis. May act by specifically recognizing and binding histone H2AX phosphorylated on 'Tyr-142' (H2AXY142ph) at double-strand breaks (DSBs), recruiting other pro-apoptosis factors such as MAPK8/JNK1. Required for histone H4 acetylation at double-strand breaks (DSBs). Its ability to specifically bind modified histones and chromatin modifying enzymes such as KAT5/TIP60, probably explains its transcription activation activity. Functions in association with TSHZ3, SET and HDAC factors as a transcriptional repressor, that inhibits the expression of CASP4. Associates with chromatin in a region surrounding the CASP4 transcriptional start site(s). Involved in hippocampal neurite branching and neuromuscular junction formation, as a result plays a role in spatial memory functioning. Plays a role in the maintenance of lens transparency. May play a role in muscle cell strength. Acts as a molecular adapter that functions in neurite outgrowth by activating the RAC1-ARF6 axis upon insulin treatment. This chain is Amyloid beta precursor protein binding family B member 1, found in Rattus norvegicus (Rat).